The sequence spans 425 residues: Glutamyl-tRNA reductase (425 aa).

Substrate is bound by residues 49–52 (TCNR), S109, 114–116 (EGQ), and Q120. C50 serves as the catalytic Nucleophile. 189–194 (GAGETG) contributes to the NADP(+) binding site.

Belongs to the glutamyl-tRNA reductase family. In terms of assembly, homodimer.

The enzyme catalyses (S)-4-amino-5-oxopentanoate + tRNA(Glu) + NADP(+) = L-glutamyl-tRNA(Glu) + NADPH + H(+). It functions in the pathway porphyrin-containing compound metabolism; protoporphyrin-IX biosynthesis; 5-aminolevulinate from L-glutamyl-tRNA(Glu): step 1/2. The protein operates within porphyrin-containing compound metabolism; chlorophyll biosynthesis. Its function is as follows. Catalyzes the NADPH-dependent reduction of glutamyl-tRNA(Glu) to glutamate 1-semialdehyde (GSA). This is Glutamyl-tRNA reductase from Chlorobium luteolum (strain DSM 273 / BCRC 81028 / 2530) (Pelodictyon luteolum).